The sequence spans 427 residues: Peptidase B (427 aa).

Residues Lys-195 and Asp-200 each coordinate Mn(2+). Residue Lys-207 is part of the active site. Asp-218, Asp-277, and Glu-279 together coordinate Mn(2+). Arg-281 is an active-site residue.

The protein belongs to the peptidase M17 family. As to quaternary structure, homohexamer. The cofactor is Mn(2+).

It is found in the cytoplasm. The enzyme catalyses Release of an N-terminal amino acid, Xaa, from a peptide or arylamide. Xaa is preferably Glu or Asp but may be other amino acids, including Leu, Met, His, Cys and Gln.. Functionally, probably plays an important role in intracellular peptide degradation. In Salmonella dublin (strain CT_02021853), this protein is Peptidase B.